The chain runs to 457 residues: Argininosuccinate lyase (457 aa).

Belongs to the lyase 1 family. Argininosuccinate lyase subfamily.

The protein localises to the cytoplasm. The enzyme catalyses 2-(N(omega)-L-arginino)succinate = fumarate + L-arginine. Its pathway is amino-acid biosynthesis; L-arginine biosynthesis; L-arginine from L-ornithine and carbamoyl phosphate: step 3/3. The protein is Argininosuccinate lyase of Escherichia coli O157:H7 (strain EC4115 / EHEC).